We begin with the raw amino-acid sequence, 223 residues long: Lipoprotein-releasing system ATP-binding protein LolD (223 aa).

One can recognise an ABC transporter domain in the interval 2–223 (IQVRNLKKTF…LRDGEIVTCA (222 aa)). 38–45 (GVSGAGKT) is a binding site for ATP.

This sequence belongs to the ABC transporter superfamily. Lipoprotein translocase (TC 3.A.1.125) family. As to quaternary structure, the complex is composed of two ATP-binding proteins (LolD) and two transmembrane proteins (LolC and LolE).

The protein resides in the cell inner membrane. Functionally, part of the ABC transporter complex LolCDE involved in the translocation of mature outer membrane-directed lipoproteins, from the inner membrane to the periplasmic chaperone, LolA. Responsible for the formation of the LolA-lipoprotein complex in an ATP-dependent manner. The sequence is that of Lipoprotein-releasing system ATP-binding protein LolD from Syntrophus aciditrophicus (strain SB).